A 71-amino-acid polypeptide reads, in one-letter code: Large ribosomal subunit protein uL29 (71 aa).

The tract at residues M1–E20 is disordered.

The protein belongs to the universal ribosomal protein uL29 family.

This chain is Large ribosomal subunit protein uL29, found in Clostridium kluyveri (strain ATCC 8527 / DSM 555 / NBRC 12016 / NCIMB 10680 / K1).